The chain runs to 488 residues: Probable malate:quinone oxidoreductase (488 aa).

It belongs to the MQO family. FAD serves as cofactor.

It catalyses the reaction (S)-malate + a quinone = a quinol + oxaloacetate. The protein operates within carbohydrate metabolism; tricarboxylic acid cycle; oxaloacetate from (S)-malate (quinone route): step 1/1. This is Probable malate:quinone oxidoreductase from Neisseria meningitidis serogroup A / serotype 4A (strain DSM 15465 / Z2491).